The following is a 385-amino-acid chain: Glutamate 5-kinase (385 aa).

K17 provides a ligand contact to ATP. Substrate is bound by residues S64, D151, and N165. 185–186 (SD) contributes to the ATP binding site. Residues 291-367 (SGTVRVDAGA…NQIDNILGYN (77 aa)) form the PUA domain.

The protein belongs to the glutamate 5-kinase family.

Its subcellular location is the cytoplasm. The enzyme catalyses L-glutamate + ATP = L-glutamyl 5-phosphate + ADP. It participates in amino-acid biosynthesis; L-proline biosynthesis; L-glutamate 5-semialdehyde from L-glutamate: step 1/2. In terms of biological role, catalyzes the transfer of a phosphate group to glutamate to form L-glutamate 5-phosphate. The polypeptide is Glutamate 5-kinase (Methanosarcina acetivorans (strain ATCC 35395 / DSM 2834 / JCM 12185 / C2A)).